Reading from the N-terminus, the 611-residue chain is Dihydroxy-acid dehydratase (611 aa).

Asp-81 provides a ligand contact to Mg(2+). A [2Fe-2S] cluster-binding site is contributed by Cys-122. Mg(2+) is bound by residues Asp-123 and Lys-124. Lys-124 is modified (N6-carboxylysine). Position 195 (Cys-195) interacts with [2Fe-2S] cluster. Glu-491 is a binding site for Mg(2+). Ser-517 (proton acceptor) is an active-site residue.

This sequence belongs to the IlvD/Edd family. In terms of assembly, homodimer. [2Fe-2S] cluster serves as cofactor. Mg(2+) is required as a cofactor.

It catalyses the reaction (2R)-2,3-dihydroxy-3-methylbutanoate = 3-methyl-2-oxobutanoate + H2O. It carries out the reaction (2R,3R)-2,3-dihydroxy-3-methylpentanoate = (S)-3-methyl-2-oxopentanoate + H2O. It participates in amino-acid biosynthesis; L-isoleucine biosynthesis; L-isoleucine from 2-oxobutanoate: step 3/4. It functions in the pathway amino-acid biosynthesis; L-valine biosynthesis; L-valine from pyruvate: step 3/4. Functions in the biosynthesis of branched-chain amino acids. Catalyzes the dehydration of (2R,3R)-2,3-dihydroxy-3-methylpentanoate (2,3-dihydroxy-3-methylvalerate) into 2-oxo-3-methylpentanoate (2-oxo-3-methylvalerate) and of (2R)-2,3-dihydroxy-3-methylbutanoate (2,3-dihydroxyisovalerate) into 2-oxo-3-methylbutanoate (2-oxoisovalerate), the penultimate precursor to L-isoleucine and L-valine, respectively. The sequence is that of Dihydroxy-acid dehydratase from Brucella anthropi (strain ATCC 49188 / DSM 6882 / CCUG 24695 / JCM 21032 / LMG 3331 / NBRC 15819 / NCTC 12168 / Alc 37) (Ochrobactrum anthropi).